We begin with the raw amino-acid sequence, 474 residues long: tRNA-2-methylthio-N(6)-dimethylallyladenosine synthase (474 aa).

Residues 3-120 (KKLLIKTWGC…LPEMIKQSQT (118 aa)) form the MTTase N-terminal domain. [4Fe-4S] cluster-binding residues include C12, C49, C83, C157, C161, and C164. One can recognise a Radical SAM core domain in the interval 143–375 (RAEGATAFVS…QQTINAQAMR (233 aa)). In terms of domain architecture, TRAM spans 378 to 441 (RLMLATEQRV…ANSLRGELVR (64 aa)).

The protein belongs to the methylthiotransferase family. MiaB subfamily. As to quaternary structure, monomer. Requires [4Fe-4S] cluster as cofactor.

It is found in the cytoplasm. It catalyses the reaction N(6)-dimethylallyladenosine(37) in tRNA + (sulfur carrier)-SH + AH2 + 2 S-adenosyl-L-methionine = 2-methylsulfanyl-N(6)-dimethylallyladenosine(37) in tRNA + (sulfur carrier)-H + 5'-deoxyadenosine + L-methionine + A + S-adenosyl-L-homocysteine + 2 H(+). In terms of biological role, catalyzes the methylthiolation of N6-(dimethylallyl)adenosine (i(6)A), leading to the formation of 2-methylthio-N6-(dimethylallyl)adenosine (ms(2)i(6)A) at position 37 in tRNAs that read codons beginning with uridine. This is tRNA-2-methylthio-N(6)-dimethylallyladenosine synthase from Vibrio parahaemolyticus serotype O3:K6 (strain RIMD 2210633).